The primary structure comprises 239 residues: Lipoprotein-releasing system ATP-binding protein LolD (239 aa).

In terms of domain architecture, ABC transporter spans 9–239; that stretch reads LQVQHVSKHY…AATSPTGLAE (231 aa). 45-52 lines the ATP pocket; sequence GSSGSGKS.

The protein belongs to the ABC transporter superfamily. Lipoprotein translocase (TC 3.A.1.125) family. In terms of assembly, the complex is composed of two ATP-binding proteins (LolD) and two transmembrane proteins (LolC and LolE).

The protein localises to the cell inner membrane. Part of the ABC transporter complex LolCDE involved in the translocation of mature outer membrane-directed lipoproteins, from the inner membrane to the periplasmic chaperone, LolA. Responsible for the formation of the LolA-lipoprotein complex in an ATP-dependent manner. This Shewanella frigidimarina (strain NCIMB 400) protein is Lipoprotein-releasing system ATP-binding protein LolD.